We begin with the raw amino-acid sequence, 353 residues long: Holliday junction branch migration complex subunit RuvB (353 aa).

The large ATPase domain (RuvB-L) stretch occupies residues 4 to 190; it reads HYIRFKIMTN…FGIPMRLNFY (187 aa). Residues Ile29, Arg30, Gly71, Lys74, Thr75, Thr76, 137 to 139, Arg180, Tyr190, and Arg227 contribute to the ATP site; that span reads EDF. Thr75 contributes to the Mg(2+) binding site. Positions 191–261 are small ATPAse domain (RuvB-S); it reads NTEELKKVLN…ISDFGLNRLE (71 aa). The interval 264–353 is head domain (RuvB-H); sequence RIGLDSNDYR…HQFNIFNEHE (90 aa). DNA-binding residues include Arg300, Arg319, and Arg324.

Belongs to the RuvB family. As to quaternary structure, homohexamer. Forms an RuvA(8)-RuvB(12)-Holliday junction (HJ) complex. HJ DNA is sandwiched between 2 RuvA tetramers; dsDNA enters through RuvA and exits via RuvB. An RuvB hexamer assembles on each DNA strand where it exits the tetramer. Each RuvB hexamer is contacted by two RuvA subunits (via domain III) on 2 adjacent RuvB subunits; this complex drives branch migration. In the full resolvosome a probable DNA-RuvA(4)-RuvB(12)-RuvC(2) complex forms which resolves the HJ.

The protein localises to the cytoplasm. The catalysed reaction is ATP + H2O = ADP + phosphate + H(+). Functionally, the RuvA-RuvB-RuvC complex processes Holliday junction (HJ) DNA during genetic recombination and DNA repair, while the RuvA-RuvB complex plays an important role in the rescue of blocked DNA replication forks via replication fork reversal (RFR). RuvA specifically binds to HJ cruciform DNA, conferring on it an open structure. The RuvB hexamer acts as an ATP-dependent pump, pulling dsDNA into and through the RuvAB complex. RuvB forms 2 homohexamers on either side of HJ DNA bound by 1 or 2 RuvA tetramers; 4 subunits per hexamer contact DNA at a time. Coordinated motions by a converter formed by DNA-disengaged RuvB subunits stimulates ATP hydrolysis and nucleotide exchange. Immobilization of the converter enables RuvB to convert the ATP-contained energy into a lever motion, pulling 2 nucleotides of DNA out of the RuvA tetramer per ATP hydrolyzed, thus driving DNA branch migration. The RuvB motors rotate together with the DNA substrate, which together with the progressing nucleotide cycle form the mechanistic basis for DNA recombination by continuous HJ branch migration. Branch migration allows RuvC to scan DNA until it finds its consensus sequence, where it cleaves and resolves cruciform DNA. The chain is Holliday junction branch migration complex subunit RuvB from Rickettsia massiliae (strain Mtu5).